Reading from the N-terminus, the 258-residue chain is Hydroxyacylglutathione hydrolase cytoplasmic (258 aa).

Residues His54 and His56 each coordinate Zn(2+). Asp58 and His59 together coordinate Fe cation. Zn(2+)-binding residues include His112 and Asp135. Asp135 is a Fe cation binding site. Residues 144–146 (KFF) and 174–176 (HEY) contribute to the substrate site. His174 provides a ligand contact to Fe cation.

The protein belongs to the metallo-beta-lactamase superfamily. Glyoxalase II family. As to quaternary structure, homodimer. Fe(2+) is required as a cofactor. Zn(2+) serves as cofactor. The cofactor is Fe(3+). In terms of tissue distribution, mainly expressed in flowers and flower buds. Also detected in roots and leaves.

The protein resides in the cytoplasm. It carries out the reaction an S-(2-hydroxyacyl)glutathione + H2O = a 2-hydroxy carboxylate + glutathione + H(+). It functions in the pathway secondary metabolite metabolism; methylglyoxal degradation; (R)-lactate from methylglyoxal: step 2/2. Functionally, thiolesterase that catalyzes the hydrolysis of S-D-lactoyl-glutathione to form glutathione and D-lactic acid. The polypeptide is Hydroxyacylglutathione hydrolase cytoplasmic (GLX2-2) (Arabidopsis thaliana (Mouse-ear cress)).